Consider the following 641-residue polypeptide: Kelch-like protein 22 (641 aa).

The disordered stretch occupies residues 1–25 (MAEDLETMKPSQAPQQPSLPQGSSK). The segment covering 10–24 (PSQAPQQPSLPQGSS) has biased composition (low complexity). A BTB domain is found at 50-117 (FDVVLKVEGK…IYTSDLALSV (68 aa)). 6 Kelch repeats span residues 299–349 (CVVG…VLNN), 350–399 (FVYL…VLGD), 400–446 (FLYA…ALDG), 448–493 (MYVA…ALQE), 494–544 (KIYL…VLAK), and 545–593 (KIFV…VLTL).

As to quaternary structure, component of the BCR(KLHL22) E3 ubiquitin ligase complex, at least composed of cul3, klhl22 and rbx1.

It is found in the cytoplasm. It localises to the cytosol. Its subcellular location is the cytoskeleton. The protein resides in the microtubule organizing center. The protein localises to the centrosome. It is found in the spindle. It localises to the nucleus. Its subcellular location is the lysosome. The protein operates within protein modification; protein ubiquitination. Functionally, substrate-specific adapter of a BCR (BTB-CUL3-RBX1) E3 ubiquitin ligase complex. The BCR(KLHL22) ubiquitin ligase complex could mediate the monoubiquitination of PLK1 and regulate its activity in spindle assembly checkpoint (SAC) and chromosome segregation. The BCR(KLHL22) ubiquitin ligase complex may also be responsible for the ubiquitin-dependent proteasomal degradation of DEPDC5 and the activation of the TORC1 pathway. The chain is Kelch-like protein 22 (klhl22) from Xenopus tropicalis (Western clawed frog).